The primary structure comprises 146 residues: Ribonuclease H (146 aa).

Positions Met1 to Gln143 constitute an RNase H type-1 domain. 4 residues coordinate Mg(2+): Asp10, Glu48, Asp70, and Asp135.

Belongs to the RNase H family. Monomer. Mg(2+) serves as cofactor.

The protein localises to the cytoplasm. The catalysed reaction is Endonucleolytic cleavage to 5'-phosphomonoester.. Endonuclease that specifically degrades the RNA of RNA-DNA hybrids. The polypeptide is Ribonuclease H (Chlorobium luteolum (strain DSM 273 / BCRC 81028 / 2530) (Pelodictyon luteolum)).